Reading from the N-terminus, the 316-residue chain is tRNA dimethylallyltransferase (316 aa).

Position 17–24 (17–24 (GPTASGKT)) interacts with ATP. Substrate is bound at residue 19–24 (TASGKT). Interaction with substrate tRNA regions lie at residues 42–45 (DSAL), 166–170 (QRLSR), and 247–252 (RCVGYR).

The protein belongs to the IPP transferase family. Monomer. Mg(2+) serves as cofactor.

It catalyses the reaction adenosine(37) in tRNA + dimethylallyl diphosphate = N(6)-dimethylallyladenosine(37) in tRNA + diphosphate. Functionally, catalyzes the transfer of a dimethylallyl group onto the adenine at position 37 in tRNAs that read codons beginning with uridine, leading to the formation of N6-(dimethylallyl)adenosine (i(6)A). In Salmonella paratyphi A (strain ATCC 9150 / SARB42), this protein is tRNA dimethylallyltransferase.